Reading from the N-terminus, the 299-residue chain is Regucalcin (299 aa).

E18 contributes to the a divalent metal cation binding site. 3 residues coordinate substrate: R101, N103, and E121. Residue K144 is modified to N6-succinyllysine. Positions 154 and 204 each coordinate a divalent metal cation. D204 functions as the Proton donor/acceptor in the catalytic mechanism. N6-succinyllysine is present on residues K244 and K253.

The protein belongs to the SMP-30/CGR1 family. In terms of assembly, monomer. Zn(2+) serves as cofactor. It depends on Mn(2+) as a cofactor. The cofactor is Ca(2+). Requires Mg(2+) as cofactor. In terms of tissue distribution, mainly present in the liver. Weak expression was found in the brain, lung and kidney.

It localises to the cytoplasm. It carries out the reaction D-glucono-1,5-lactone + H2O = D-gluconate + H(+). It functions in the pathway cofactor biosynthesis; L-ascorbate biosynthesis via UDP-alpha-D-glucuronate pathway; L-ascorbate from UDP-alpha-D-glucuronate: step 3/4. Its function is as follows. Gluconolactonase with low activity towards other sugar lactones, including gulonolactone and galactonolactone. Catalyzes a key step in ascorbic acid (vitamin C) biosynthesis. Can also hydrolyze diisopropyl phosphorofluoridate and phenylacetate (in vitro). Calcium-binding protein. Modulates Ca(2+) signaling, and Ca(2+)-dependent cellular processes and enzyme activities. This chain is Regucalcin (Rgn), found in Mus musculus (Mouse).